We begin with the raw amino-acid sequence, 363 residues long: Pyrimidine monooxygenase RutA (363 aa).

Residues 49–50, N115, E124, 140–141, and S190 contribute to the FMN site; these read IK and RY.

The protein belongs to the NtaA/SnaA/DszA monooxygenase family. RutA subfamily.

It catalyses the reaction uracil + FMNH2 + NADH + O2 = (Z)-3-ureidoacrylate + FMN + NAD(+) + H2O + H(+). The catalysed reaction is thymine + FMNH2 + NADH + O2 = (Z)-2-methylureidoacrylate + FMN + NAD(+) + H2O + H(+). Its function is as follows. Catalyzes the pyrimidine ring opening between N-3 and C-4 by an unusual flavin hydroperoxide-catalyzed mechanism, adding oxygen atoms in the process to yield ureidoacrylate peracid, that immediately reacts with FMN forming ureidoacrylate and FMN-N(5)-oxide. The FMN-N(5)-oxide reacts spontaneously with NADH to produce FMN. Requires the flavin reductase RutF to regenerate FMN in vivo. This chain is Pyrimidine monooxygenase RutA, found in Escherichia coli O6:K15:H31 (strain 536 / UPEC).